Reading from the N-terminus, the 787-residue chain is Protein translocase subunit SecA (787 aa).

ATP is bound by residues Q85, 103-107 (GEGKT), and D492.

This sequence belongs to the SecA family. Monomer and homodimer. Part of the essential Sec protein translocation apparatus which comprises SecA, SecYEG and auxiliary proteins SecDF. Other proteins may also be involved.

Its subcellular location is the cell membrane. The protein resides in the cytoplasm. It catalyses the reaction ATP + H2O + cellular proteinSide 1 = ADP + phosphate + cellular proteinSide 2.. Its function is as follows. Part of the Sec protein translocase complex. Interacts with the SecYEG preprotein conducting channel. Has a central role in coupling the hydrolysis of ATP to the transfer of proteins into and across the cell membrane, serving as an ATP-driven molecular motor driving the stepwise translocation of polypeptide chains across the membrane. This chain is Protein translocase subunit SecA, found in Lacticaseibacillus casei (strain BL23) (Lactobacillus casei).